The sequence spans 240 residues: MDVARSEFFETGTPVACTSCQARHGVVCGALSKGQLRELNRHSLRRKIEAGCEIIAQGSESSFYSNIMRGVMKLCKVMPDGRQQIVGLQFAPDFVGRPFVRESTLSAEAATDSEICVFPRNLLDRMISETPELQRSLHDQALKELDAAREWMLTLGRRTAEEKVASLLHLIATHAEPQTATSTAFDLPLSRAEIADFLGLTIETVSRQMTRLRKIGVIRIENFRHIIVPDMDELERMISA.

An essential for the oxygen-regulated activity region spans residues 17 to 28 (CTSCQARHGVVC). In terms of domain architecture, HTH crp-type spans 158–232 (RTAEEKVASL…FRHIIVPDMD (75 aa)). The segment at residues 191 to 210 (RAEIADFLGLTIETVSRQMT) is a DNA-binding region (H-T-H motif).

Its function is as follows. Promotes the microaerobic and symbiotic induction of fixN, possibly by binding to the FNR consensus binding site upstream of fixN. This Rhizobium leguminosarum bv. viciae protein is Probable transcriptional activator (fnrN).